Reading from the N-terminus, the 495-residue chain is Sugar phosphate exchanger 3 (495 aa).

Residues 16-36 (FSHHHMVVFLLTFFSYSLLHA) form a helical membrane-spanning segment. Residue asparagine 58 is glycosylated (N-linked (GlcNAc...) asparagine). 5 consecutive transmembrane segments (helical) span residues 82–102 (TLFLGMLDTIFLFSYAVGLFI), 114–134 (WVLSFGMCSSALVVFVFGTLT), 148–168 (LWIVNGLLQSTGWPCVVAVMG), 178–198 (VVFGLWSACASVGNILGACLA), and 210–230 (FLVTAAVQFAGGIIIFFGLLV). A glycan (N-linked (GlcNAc...) asparagine) is linked at asparagine 267. A run of 6 helical transmembrane segments spans residues 298-318 (LAYACLKLVNYSFFFWLPFYL), 334-354 (IWYDVGGIIGGTLQGFISDML), 358-378 (APVLALSLLLAIGSLVGYSRS), 387-407 (LLMAVTGFFIGGPSNMISSAI), 429-449 (GIVDGTGSIGAAVGQYLVSLI), and 453-473 (LGWMWVFYFFILMTSCTVLFI).

This sequence belongs to the major facilitator superfamily. Organophosphate:Pi antiporter (OPA) (TC 2.A.1.4) family. As to quaternary structure, interacts with ATRAID; the interaction is direct and both proteins are mutually dependent for their stability. Post-translationally, glycosylated.

It is found in the endoplasmic reticulum membrane. Its subcellular location is the lysosome membrane. Its function is as follows. Unlike the other SLC37 members, lacks glucose-6-phosphate antiporter activity. In osteoclasts, forms a transporter complex with ATRAID for nitrogen-containing-bisphophonates (N-BPs) required for releasing N-BP molecules that have trafficked to lysosomes through fluid-phase endocytosis into the cytosol. This chain is Sugar phosphate exchanger 3 (SLC37A3), found in Bos taurus (Bovine).